A 364-amino-acid chain; its full sequence is Aminomethyltransferase (364 aa).

Belongs to the GcvT family. As to quaternary structure, the glycine cleavage system is composed of four proteins: P, T, L and H.

It carries out the reaction N(6)-[(R)-S(8)-aminomethyldihydrolipoyl]-L-lysyl-[protein] + (6S)-5,6,7,8-tetrahydrofolate = N(6)-[(R)-dihydrolipoyl]-L-lysyl-[protein] + (6R)-5,10-methylene-5,6,7,8-tetrahydrofolate + NH4(+). In terms of biological role, the glycine cleavage system catalyzes the degradation of glycine. The chain is Aminomethyltransferase from Desulforamulus reducens (strain ATCC BAA-1160 / DSM 100696 / MI-1) (Desulfotomaculum reducens).